The sequence spans 243 residues: DNA repair protein RecO (243 aa).

The protein belongs to the RecO family.

Involved in DNA repair and RecF pathway recombination. The sequence is that of DNA repair protein RecO from Beutenbergia cavernae (strain ATCC BAA-8 / DSM 12333 / CCUG 43141 / JCM 11478 / NBRC 16432 / NCIMB 13614 / HKI 0122).